A 524-amino-acid polypeptide reads, in one-letter code: Excitatory amino acid transporter 3 (524 aa).

The Cytoplasmic segment spans residues 1–18 (MGKPARKGCDWKRFLRNN). Residues 19 to 38 (WLLLSTVVAVVLGIVIGVLV) traverse the membrane as a helical segment. The Extracellular segment spans residues 39-61 (REYSKLSNLEKFYFSFPGEILMR). The helical transmembrane segment at 62-82 (MLKLVILPLIVSSMITGVATL) threads the bilayer. Residues 83–93 (DSNVSGKIGLR) lie on the Cytoplasmic side of the membrane. Residues 94–114 (AVVYYFCTTLIAVILGIVLVV) traverse the membrane as a helical segment. Positions 98, 101, and 102 each coordinate Na(+). Residues 115–205 (SIKPGVTQKV…KTKEYKVVGM (91 aa)) are Extracellular-facing. Residues Asn-178 and Asn-195 are each glycosylated (N-linked (GlcNAc...) asparagine). A helical transmembrane segment spans residues 206–229 (YSDGINVLGLIVFCLVLGIVIGRK). Residues 230–238 (WEKGQILVD) lie on the Cytoplasmic side of the membrane. Residues 239 to 266 (FFNALSDATMKIVQIIMCYMPIGILFLI) form a helical membrane-spanning segment. Residues 267 to 286 (AGKIIEVEDWEIFRKLGLYM) lie on the Extracellular side of the membrane. A helical transmembrane segment spans residues 287–308 (ATVLSGLAIHSIVILPLIYFII). At 309–313 (VRKNP) the chain is on the cytoplasmic side. The discontinuously helical intramembrane region spans 314 to 344 (FQFAMGMAQALLTALMISSSSATLPVTFRCA). L-aspartate contacts are provided by Ser-331 and Ser-333. The Cytoplasmic segment spans residues 345 to 353 (EEKNRVDKR). Residues 354 to 380 (ITRFVLPVGATINMDGTALYEAVAAVF) traverse the membrane as a helical segment. Residues Gly-362, Thr-364, Asn-366, and Asp-368 each coordinate Na(+). Thr-370 is a binding site for L-aspartate. Topologically, residues 381 to 393 (IAQLNDLDLSVGQ) are extracellular. The segment at residues 394–427 (IITISVTATAASIGAAGVPQPGLVTMVIVLSAVG) is an intramembrane region (discontinuously helical). Na(+) contacts are provided by Ser-405, Ile-406, and Ala-408. Val-411 contacts L-aspartate. Topologically, residues 428–440 (LPAEDVTLIIAVD) are extracellular. The helical transmembrane segment at 441–462 (WLLDRFRTMVNVLGDAFGTGIV) threads the bilayer. L-aspartate is bound by residues Arg-447, Thr-448, and Asn-451. The Na(+) site is built by Asn-451 and Asp-455. At 463–524 (EKLSKKELEQ…TISFTQTSQF (62 aa)) the chain is on the cytoplasmic side. 2 positions are modified to phosphoserine: Ser-517 and Ser-522.

It belongs to the dicarboxylate/amino acid:cation symporter (DAACS) (TC 2.A.23) family. SLC1A1 subfamily. Homotrimer. Interacts with ARL6IP5. Interacts with RTN2 (via N-terminus); the interaction promotes cell surface expression of SLC1A1. Interacts with SORCS2; this interaction is important for normal expression at the cell membrane.

It localises to the cell membrane. The protein resides in the apical cell membrane. The protein localises to the synapse. It is found in the synaptosome. Its subcellular location is the early endosome membrane. It localises to the late endosome membrane. The protein resides in the recycling endosome membrane. The catalysed reaction is K(+)(in) + L-glutamate(out) + 3 Na(+)(out) + H(+)(out) = K(+)(out) + L-glutamate(in) + 3 Na(+)(in) + H(+)(in). It catalyses the reaction K(+)(in) + L-aspartate(out) + 3 Na(+)(out) + H(+)(out) = K(+)(out) + L-aspartate(in) + 3 Na(+)(in) + H(+)(in). It carries out the reaction D-aspartate(out) + K(+)(in) + 3 Na(+)(out) + H(+)(out) = D-aspartate(in) + K(+)(out) + 3 Na(+)(in) + H(+)(in). The enzyme catalyses K(+)(in) + L-cysteine(out) + 3 Na(+)(out) + H(+)(out) = K(+)(out) + L-cysteine(in) + 3 Na(+)(in) + H(+)(in). Its function is as follows. Sodium-dependent, high-affinity amino acid transporter that mediates the uptake of L-glutamate and also L-aspartate and D-aspartate. Can also transport L-cysteine. Functions as a symporter that transports one amino acid molecule together with two or three Na(+) ions and one proton, in parallel with the counter-transport of one K(+) ion. Mediates Cl(-) flux that is not coupled to amino acid transport; this avoids the accumulation of negative charges due to aspartate and Na(+) symport. Plays an important role in L-glutamate and L-aspartate reabsorption in renal tubuli. Plays a redundant role in the rapid removal of released glutamate from the synaptic cleft, which is essential for terminating the postsynaptic action of glutamate. Contributes to glutathione biosynthesis and protection against oxidative stress via its role in L-glutamate and L-cysteine transport. Negatively regulated by ARL6IP5. The protein is Excitatory amino acid transporter 3 (SLC1A1) of Bos taurus (Bovine).